The chain runs to 196 residues: 3-isopropylmalate dehydratase small subunit (196 aa).

This sequence belongs to the LeuD family. LeuD type 1 subfamily. Heterodimer of LeuC and LeuD.

The enzyme catalyses (2R,3S)-3-isopropylmalate = (2S)-2-isopropylmalate. It functions in the pathway amino-acid biosynthesis; L-leucine biosynthesis; L-leucine from 3-methyl-2-oxobutanoate: step 2/4. In terms of biological role, catalyzes the isomerization between 2-isopropylmalate and 3-isopropylmalate, via the formation of 2-isopropylmaleate. The sequence is that of 3-isopropylmalate dehydratase small subunit from Streptococcus gordonii (strain Challis / ATCC 35105 / BCRC 15272 / CH1 / DL1 / V288).